Consider the following 195-residue polypeptide: NADH-quinone oxidoreductase subunit C (195 aa).

It belongs to the complex I 30 kDa subunit family. As to quaternary structure, NDH-1 is composed of 14 different subunits. Subunits NuoB, C, D, E, F, and G constitute the peripheral sector of the complex.

The protein localises to the cell inner membrane. The enzyme catalyses a quinone + NADH + 5 H(+)(in) = a quinol + NAD(+) + 4 H(+)(out). Its function is as follows. NDH-1 shuttles electrons from NADH, via FMN and iron-sulfur (Fe-S) centers, to quinones in the respiratory chain. The immediate electron acceptor for the enzyme in this species is believed to be ubiquinone. Couples the redox reaction to proton translocation (for every two electrons transferred, four hydrogen ions are translocated across the cytoplasmic membrane), and thus conserves the redox energy in a proton gradient. The protein is NADH-quinone oxidoreductase subunit C of Laribacter hongkongensis (strain HLHK9).